The sequence spans 287 residues: CRISPR-associated endoribonuclease Cas6 1 (287 aa).

Belongs to the CRISPR-associated endoribonuclease Cas6 family. As to quaternary structure, part of the aCascade ribonucleoprotein complex, minimally composed of Csa2 and Cas5a, which binds crRNA. Other possible components of aCascade in strain P1 are Cas6b (SSO1437) and Csa5 (SSO1443), while SSO1399, Cas5b (SSO1400) and SSO1401 have sometimes been seen weakly associated. Csa2 is probably the major RNA-binding subunit. The Csa2-Cas5a-crRNA complex also binds target DNA homologous to crRNA, probably forming an R-loop. Purified aCascade forms a filament about 6 nm in width.

CRISPR (clustered regularly interspaced short palindromic repeat) is an adaptive immune system that provides protection against mobile genetic elements (viruses, transposable elements and conjugative plasmids). CRISPR clusters contain spacers, sequences complementary to antecedent mobile elements, and target invading nucleic acids. CRISPR clusters are transcribed and processed into CRISPR RNA (crRNA). This Saccharolobus solfataricus (strain ATCC 35092 / DSM 1617 / JCM 11322 / P2) (Sulfolobus solfataricus) protein is CRISPR-associated endoribonuclease Cas6 1 (cas6a).